Consider the following 375-residue polypeptide: CD2 homolog (375 aa).

An N-terminal signal peptide occupies residues 1 to 16 (MIIILIFLIIPNIVLS). Over 17–207 (IDYWVSFNKT…YLDFFQVASY (191 aa)) the chain is Extracellular. Residues asparagine 24, asparagine 80, asparagine 105, asparagine 122, asparagine 134, asparagine 145, asparagine 168, asparagine 176, and asparagine 183 are each glycosylated (N-linked (GlcNAc...) asparagine; by host). 2 disulfide bridges follow: cysteine 123/cysteine 190 and cysteine 130/cysteine 173. Residues 208-228 (MFYMIIFIATGIIASIFISII) traverse the membrane as a helical segment. The Cytoplasmic portion of the chain corresponds to 229 to 375 (TFLSLRKRKK…ISLIHVDRII (147 aa)). Residues 242–278 (EIESPSPSESNEEEQCQHDDTTSIHEPSPREPLLPKP) form a disordered region. Over residues 256–270 (QCQHDDTTSIHEPSP) the composition is skewed to basic and acidic residues. 5 consecutive repeat copies span residues 305–310 (KLCPPP), 311–316 (KPCPPP), 317–322 (KPCPPP), 323–328 (KPCPPP), and 329–334 (KPCPSS). Residues 305–334 (KLCPPPKPCPPPKPCPPPKPCPPPKPCPSS) are 5 X 6 AA tandem repeats of K-[LP]-C-[PRS]-[PS]-[PS]. Residues 323–350 (KPCPPPKPCPSSESCSPPESYSLPKPLP) are disordered. A compositionally biased stretch (low complexity) spans 332 to 346 (PSSESCSPPESYSLP).

Belongs to the asfivirus CD2 homolog protein family. Both glycosylated and nonglycosylated forms interact (via C-terminus) with the host AP-1 complex. Post-translationally, cleaved into two fragments of 63 kDa and 26 kDa containing respectively the glycosylated N-terminus and the nonglycosylated C-terminus. A full-length 89-kDa glycosylated form also exists.

The protein resides in the host membrane. Its subcellular location is the virion membrane. It is found in the host Golgi apparatus. May play an immunosuppressive role by inhibiting lymphocyte proliferation and subsequently facilitating viral replication and generalization of infection. Responsible for viral hemadsorption, which may help viral spread. Increases virus replication in the tick vector at the step of virus uptake or replication in the tick gut. May play a role in the host Golgi reorganization to yield viral factories. May play a role in host cell penetration. The sequence is that of CD2 homolog from Ornithodoros (relapsing fever ticks).